A 309-amino-acid chain; its full sequence is Ribonuclease Z (309 aa).

Positions 63, 65, 67, 68, 145, 216, and 274 each coordinate Zn(2+). Residue aspartate 67 is the Proton acceptor of the active site.

The protein belongs to the RNase Z family. Homodimer. It depends on Zn(2+) as a cofactor.

The catalysed reaction is Endonucleolytic cleavage of RNA, removing extra 3' nucleotides from tRNA precursor, generating 3' termini of tRNAs. A 3'-hydroxy group is left at the tRNA terminus and a 5'-phosphoryl group is left at the trailer molecule.. Functionally, zinc phosphodiesterase, which displays some tRNA 3'-processing endonuclease activity. Probably involved in tRNA maturation, by removing a 3'-trailer from precursor tRNA. This is Ribonuclease Z from Streptococcus equi subsp. zooepidemicus (strain H70).